The following is a 40-amino-acid chain: Protamine-1 (40 aa).

The disordered stretch occupies residues 1–40; it reads MPPRRKRVSSAPRRRRRTYRRTTAHKHQDRPVHRRRRRRH.

In terms of tissue distribution, testis.

The protein resides in the nucleus. It is found in the chromosome. Its function is as follows. Protamines substitute for histones in the chromatin of sperm during the haploid phase of spermatogenesis. They compact sperm DNA into a highly condensed, stable and inactive complex. This is Protamine-1 (PBP1) from Bufo japonicus (Japanese common toad).